The sequence spans 165 residues: 2-C-methyl-D-erythritol 2,4-cyclodiphosphate synthase (165 aa).

2 residues coordinate a divalent metal cation: D8 and H10. 4-CDP-2-C-methyl-D-erythritol 2-phosphate contacts are provided by residues 8-10 and 34-35; these read DVH and HS. H42 contacts a divalent metal cation. 4-CDP-2-C-methyl-D-erythritol 2-phosphate-binding positions include 56–58, 61–65, 132–135, F139, and R142; these read DIG, FPDTD, and TTTE.

This sequence belongs to the IspF family. Homotrimer. A divalent metal cation is required as a cofactor.

It catalyses the reaction 4-CDP-2-C-methyl-D-erythritol 2-phosphate = 2-C-methyl-D-erythritol 2,4-cyclic diphosphate + CMP. Its pathway is isoprenoid biosynthesis; isopentenyl diphosphate biosynthesis via DXP pathway; isopentenyl diphosphate from 1-deoxy-D-xylulose 5-phosphate: step 4/6. Its function is as follows. Involved in the biosynthesis of isopentenyl diphosphate (IPP) and dimethylallyl diphosphate (DMAPP), two major building blocks of isoprenoid compounds. Catalyzes the conversion of 4-diphosphocytidyl-2-C-methyl-D-erythritol 2-phosphate (CDP-ME2P) to 2-C-methyl-D-erythritol 2,4-cyclodiphosphate (ME-CPP) with a corresponding release of cytidine 5-monophosphate (CMP). The chain is 2-C-methyl-D-erythritol 2,4-cyclodiphosphate synthase from Halothermothrix orenii (strain H 168 / OCM 544 / DSM 9562).